Reading from the N-terminus, the 157-residue chain is Electron transfer flavoprotein regulatory factor 1 homolog (157 aa).

It belongs to the complex I LYR family.

Its subcellular location is the mitochondrion. This is Electron transfer flavoprotein regulatory factor 1 homolog from Dictyostelium discoideum (Social amoeba).